Reading from the N-terminus, the 1531-residue chain is Myosin-17 (1531 aa).

The 50-residue stretch at 8 to 57 folds into the Myosin N-terminal SH3-like domain; it reads IVGSHVWIEDPGAAWIDGEVVKINGEEVHAHTTNGKTVVANIANVFPKDT. Residues 62–732 enclose the Myosin motor domain; it reads GGVDDMTKLS…QMAELDARRA (671 aa). ATP is bound by residues 156 to 163 and 209 to 217; these read GESGAGKT and NNNSSRFGK. Actin-binding regions lie at residues 495-529, 531-554, 589-613, and 613-635; these read LIEK…YQTF, NYKR…AGEV, FPRL…KLQL, and LQSL…KPNN. 5 IQ domains span residues 758–787, 783–812, 806–835, 831–860, and 854–883; these read LRGA…QAAA, RQAA…STIT, IRHS…MKAA, QMKA…AALS, and LQKA…AARD. The stretch at 884-1056 forms a coiled coil; that stretch reads TGALREAKDK…VLRQQALAIS (173 aa). The disordered stretch occupies residues 1071-1090; it reads LPRTPENGNYLNGGTKTTPD. Residues 1076–1090 are compositionally biased toward polar residues; sequence ENGNYLNGGTKTTPD. One can recognise a Dilute domain in the interval 1159–1470; that stretch reads DRIIQTIATA…IANMRVMMTE (312 aa). The residue at position 1517 (Ser-1517) is a Phosphoserine.

This sequence belongs to the TRAFAC class myosin-kinesin ATPase superfamily. Myosin family. Plant myosin class XI subfamily. Homodimer. Interacts with MYOB1, MYOB2 and MYOB3. Interacts with PHOX1 and PHOX2. Expressed ubiquitously.

The protein resides in the cytoplasm. In terms of biological role, myosin heavy chain that is required for the cell cycle-regulated transport of various organelles and proteins for their segregation. Functions by binding with its tail domain to receptor proteins on organelles and exerting force with its N-terminal motor domain against actin filaments, thereby transporting its cargo along polarized actin cables. Involved in the tip growth of root hair cells and in the elongation of trichome stalk and branches. Plays a major role in trafficking of Golgi stacks, mitochondria and peroxisomes during root hair development. Acts as the primary contributor to ER streaming with a major role in the movement of Golgi bodies. Required for development of pavement cells, trichomes, and stigmatic papillae. Together with XI-F, required for the regulation of organ bending, such as gravitropic root bending. The protein is Myosin-17 of Arabidopsis thaliana (Mouse-ear cress).